We begin with the raw amino-acid sequence, 273 residues long: ATP synthase F(1) complex subunit gamma, mitochondrial (273 aa).

Position 14 is an N6-acetyllysine (K14). N6-succinyllysine is present on K24. The residue at position 30 (K30) is an N6-acetyllysine. N6-acetyllysine; alternate is present on K90. An N6-succinyllysine; alternate modification is found at K90. Position 113 is an N6-acetyllysine (K113). Position 121 is a phosphoserine (S121). K129 bears the N6-acetyllysine; alternate mark. The residue at position 129 (K129) is an N6-succinyllysine; alternate. K172 carries the N6-acetyllysine modification. The residue at position 245 (K245) is an N6-succinyllysine.

Belongs to the ATPase gamma chain family. Component of the ATP synthase complex composed at least of ATP5F1A/subunit alpha, ATP5F1B/subunit beta, ATP5MC1/subunit c (homooctomer), MT-ATP6/subunit a, MT-ATP8/subunit 8, ATP5ME/subunit e, ATP5MF/subunit f, ATP5MG/subunit g, ATP5MK/subunit k, ATP5MJ/subunit j, ATP5F1C/subunit gamma, ATP5F1D/subunit delta, ATP5F1E/subunit epsilon, ATP5PF/subunit F6, ATP5PB/subunit b, ATP5PD/subunit d, ATP5PO/subunit OSCP. ATP synthase complex consists of a soluble F(1) head domain (subunits alpha(3) and beta(3)) - the catalytic core - and a membrane F(0) domain - the membrane proton channel (subunits c, a, 8, e, f, g, k and j). These two domains are linked by a central stalk (subunits gamma, delta, and epsilon) rotating inside the F1 region and a stationary peripheral stalk (subunits F6, b, d, and OSCP). Interacts with FLVCR2; this interaction occurs in the absence of heme and is disrupted upon heme binding.

The protein resides in the mitochondrion inner membrane. Subunit gamma, of the mitochondrial membrane ATP synthase complex (F(1)F(0) ATP synthase or Complex V) that produces ATP from ADP in the presence of a proton gradient across the membrane which is generated by electron transport complexes of the respiratory chain. ATP synthase complex consist of a soluble F(1) head domain - the catalytic core - and a membrane F(1) domain - the membrane proton channel. These two domains are linked by a central stalk rotating inside the F(1) region and a stationary peripheral stalk. During catalysis, ATP synthesis in the catalytic domain of F(1) is coupled via a rotary mechanism of the central stalk subunits to proton translocation. In vivo, can only synthesize ATP although its ATP hydrolase activity can be activated artificially in vitro. With the central stalk subunit delta, is essential for the biogenesis of F(1) catalytic part of the ATP synthase complex namely in the formation of F1 assembly intermediate. The polypeptide is ATP synthase F(1) complex subunit gamma, mitochondrial (Rattus norvegicus (Rat)).